A 269-amino-acid polypeptide reads, in one-letter code: Ribosomal RNA small subunit methyltransferase J (269 aa).

S-adenosyl-L-methionine-binding positions include 125–126 (ER) and Asp-179.

Belongs to the methyltransferase superfamily. RsmJ family.

The protein localises to the cytoplasm. It catalyses the reaction guanosine(1516) in 16S rRNA + S-adenosyl-L-methionine = N(2)-methylguanosine(1516) in 16S rRNA + S-adenosyl-L-homocysteine + H(+). Its function is as follows. Specifically methylates the guanosine in position 1516 of 16S rRNA. The chain is Ribosomal RNA small subunit methyltransferase J from Pseudomonas syringae pv. tomato (strain ATCC BAA-871 / DC3000).